Reading from the N-terminus, the 345-residue chain is Nuclear egress protein 1 (345 aa).

The CCCH-type zinc finger occupies 115-247 (CISLSEMGYT…FVFKPGSPLH (133 aa)).

It belongs to the herpesviridae NEC1 protein family. In terms of assembly, forms a heterohexameric complex with NEC2. Interacts with capsid vertex specific component 2/CVC2; this interaction directs the capsid to the host inner nuclear membrane to initiate budding. Phosphorylated at serine residues in the N-terminus. This phosphorylation regulates the localization within the inner nuclear membrane.

Its subcellular location is the host nucleus inner membrane. Its function is as follows. Plays an essential role in virion nuclear egress, the first step of virion release from infected cell. Within the host nucleus, NEC1 interacts with the newly formed capsid through the vertexes and directs it to the inner nuclear membrane by associating with NEC2. Induces the budding of the capsid at the inner nuclear membrane as well as its envelopment into the perinuclear space. There, the NEC1/NEC2 complex promotes the fusion of the enveloped capsid with the outer nuclear membrane and the subsequent release of the viral capsid into the cytoplasm where it will reach the secondary budding sites in the host Golgi or trans-Golgi network. The polypeptide is Nuclear egress protein 1 (Psittacid herpesvirus 1 (isolate Amazon parrot/-/97-0001/1997) (PsHV-1)).